Reading from the N-terminus, the 141-residue chain is Putative RING-H2 finger protein ATL62 (141 aa).

A helical membrane pass occupies residues 14-32 (FFAILTVFYSIFRCCLAYC). Residues 79-121 (CVVCLSKFIDEDKARVLPSCNHCFHFDFTDTWLHSDYTCPNCR) form an RING-type; degenerate zinc finger.

It belongs to the RING-type zinc finger family. ATL subfamily.

The protein localises to the membrane. The enzyme catalyses S-ubiquitinyl-[E2 ubiquitin-conjugating enzyme]-L-cysteine + [acceptor protein]-L-lysine = [E2 ubiquitin-conjugating enzyme]-L-cysteine + N(6)-ubiquitinyl-[acceptor protein]-L-lysine.. The protein operates within protein modification; protein ubiquitination. This is Putative RING-H2 finger protein ATL62 (ATL62) from Arabidopsis thaliana (Mouse-ear cress).